A 154-amino-acid polypeptide reads, in one-letter code: Myoglobin (154 aa).

The region spanning 2 to 148 (GLSDGEWQLV…FRKDIAAKYK (147 aa)) is the Globin domain. Ser4 is subject to Phosphoserine. Position 65 (His65) interacts with nitrite. Position 65 (His65) interacts with O2. Thr68 bears the Phosphothreonine mark. Residue His94 coordinates heme b.

Belongs to the globin family. As to quaternary structure, monomeric.

Its subcellular location is the cytoplasm. It localises to the sarcoplasm. The catalysed reaction is Fe(III)-heme b-[protein] + nitric oxide + H2O = Fe(II)-heme b-[protein] + nitrite + 2 H(+). It carries out the reaction H2O2 + AH2 = A + 2 H2O. Functionally, monomeric heme protein which primary function is to store oxygen and facilitate its diffusion within muscle tissues. Reversibly binds oxygen through a pentacoordinated heme iron and enables its timely and efficient release as needed during periods of heightened demand. Depending on the oxidative conditions of tissues and cells, and in addition to its ability to bind oxygen, it also has a nitrite reductase activity whereby it regulates the production of bioactive nitric oxide. Under stress conditions, like hypoxia and anoxia, it also protects cells against reactive oxygen species thanks to its pseudoperoxidase activity. This Globicephala melas (Long-finned pilot whale) protein is Myoglobin (MB).